A 557-amino-acid polypeptide reads, in one-letter code: Formate--tetrahydrofolate ligase 2 (557 aa).

66–73 contacts ATP; it reads TPAGEGKT.

Belongs to the formate--tetrahydrofolate ligase family.

It catalyses the reaction (6S)-5,6,7,8-tetrahydrofolate + formate + ATP = (6R)-10-formyltetrahydrofolate + ADP + phosphate. It participates in one-carbon metabolism; tetrahydrofolate interconversion. This Streptococcus pyogenes serotype M12 (strain MGAS9429) protein is Formate--tetrahydrofolate ligase 2.